We begin with the raw amino-acid sequence, 342 residues long: Glyceraldehyde-3-phosphate dehydrogenase (342 aa).

Residues arginine 12–isoleucine 13, aspartate 34, lysine 78, and threonine 120 contribute to the NAD(+) site. D-glyceraldehyde 3-phosphate is bound by residues serine 151 to threonine 153 and threonine 182. The Nucleophile role is filled by cysteine 152. Residue asparagine 183 coordinates NAD(+). D-glyceraldehyde 3-phosphate-binding positions include arginine 197, threonine 210 to glycine 211, and arginine 233. Asparagine 322 provides a ligand contact to NAD(+).

The protein belongs to the glyceraldehyde-3-phosphate dehydrogenase family. In terms of assembly, homotetramer.

It is found in the cytoplasm. The catalysed reaction is D-glyceraldehyde 3-phosphate + phosphate + NAD(+) = (2R)-3-phospho-glyceroyl phosphate + NADH + H(+). It functions in the pathway carbohydrate degradation; glycolysis; pyruvate from D-glyceraldehyde 3-phosphate: step 1/5. Its function is as follows. Catalyzes the oxidative phosphorylation of glyceraldehyde 3-phosphate (G3P) to 1,3-bisphosphoglycerate (BPG) using the cofactor NAD. The first reaction step involves the formation of a hemiacetal intermediate between G3P and a cysteine residue, and this hemiacetal intermediate is then oxidized to a thioester, with concomitant reduction of NAD to NADH. The reduced NADH is then exchanged with the second NAD, and the thioester is attacked by a nucleophilic inorganic phosphate to produce BPG. This Aquifex aeolicus (strain VF5) protein is Glyceraldehyde-3-phosphate dehydrogenase (gap).